A 521-amino-acid chain; its full sequence is Protein nucleotidyltransferase YdiU (521 aa).

8 residues coordinate ATP: Gly109, Gly111, Arg112, Lys131, Asp143, Gly144, Arg194, and Arg201. Asp270 serves as the catalytic Proton acceptor. Positions 271 and 280 each coordinate Mg(2+). Asp280 serves as a coordination point for ATP.

Belongs to the SELO family. Mg(2+) serves as cofactor. The cofactor is Mn(2+).

The catalysed reaction is L-seryl-[protein] + ATP = 3-O-(5'-adenylyl)-L-seryl-[protein] + diphosphate. The enzyme catalyses L-threonyl-[protein] + ATP = 3-O-(5'-adenylyl)-L-threonyl-[protein] + diphosphate. It carries out the reaction L-tyrosyl-[protein] + ATP = O-(5'-adenylyl)-L-tyrosyl-[protein] + diphosphate. It catalyses the reaction L-histidyl-[protein] + UTP = N(tele)-(5'-uridylyl)-L-histidyl-[protein] + diphosphate. The catalysed reaction is L-seryl-[protein] + UTP = O-(5'-uridylyl)-L-seryl-[protein] + diphosphate. The enzyme catalyses L-tyrosyl-[protein] + UTP = O-(5'-uridylyl)-L-tyrosyl-[protein] + diphosphate. Its function is as follows. Nucleotidyltransferase involved in the post-translational modification of proteins. It can catalyze the addition of adenosine monophosphate (AMP) or uridine monophosphate (UMP) to a protein, resulting in modifications known as AMPylation and UMPylation. The polypeptide is Protein nucleotidyltransferase YdiU (Burkholderia pseudomallei (strain 1106a)).